A 62-amino-acid polypeptide reads, in one-letter code: Keratin-associated protein 6-2 (62 aa).

The protein belongs to the KRTAP type 6 family. In terms of assembly, interacts with hair keratins.

In the hair cortex, hair keratin intermediate filaments are embedded in an interfilamentous matrix, consisting of hair keratin-associated proteins (KRTAP), which are essential for the formation of a rigid and resistant hair shaft through their extensive disulfide bond cross-linking with abundant cysteine residues of hair keratins. The matrix proteins include the high-sulfur and high-glycine-tyrosine keratins. The protein is Keratin-associated protein 6-2 (KRTAP6-2) of Homo sapiens (Human).